The chain runs to 206 residues: Small ribosomal subunit protein uS4 (206 aa).

The interval 18–46 is disordered; the sequence is NIWGRPKSPVNRREYGPGQHGQRRKQKMS. Residues 94 to 154 form the S4 RNA-binding domain; the sequence is RRLDAVVYRA…EKSRQMAALL (61 aa).

The protein belongs to the universal ribosomal protein uS4 family. As to quaternary structure, part of the 30S ribosomal subunit. Contacts protein S5. The interaction surface between S4 and S5 is involved in control of translational fidelity.

In terms of biological role, one of the primary rRNA binding proteins, it binds directly to 16S rRNA where it nucleates assembly of the body of the 30S subunit. Its function is as follows. With S5 and S12 plays an important role in translational accuracy. The chain is Small ribosomal subunit protein uS4 from Dinoroseobacter shibae (strain DSM 16493 / NCIMB 14021 / DFL 12).